Consider the following 283-residue polypeptide: MKKIAIFAKVHDPRCQGVAGELITWLEQRRIVPLVEAHFARHLGRSGVTSEEIPDLADMAVVLGGDGTLISAARLLGGREIPILGVNLGSLGFLTEVTLDELYPALEACLGGDYRVSERMMLAATVERGDDIVFSHRVLNDAVINKGALARIVDMESLVNGHYLTTYKADGLIISTPTGSTGYCLSANGPIVHPDLECLTITPICPHTLTNRPIVLEASAEVTIRLISKNEDVYLTLDGQVGMELKCGDIIRVRRAEHRTRLVMSRSKDYFEVLRTKLKWGER.

The Proton acceptor role is filled by Asp66. NAD(+) is bound by residues 66–67 (DG), 140–141 (ND), Arg151, Lys168, Asp170, 181–186 (TGYCLS), and Gln240.

The protein belongs to the NAD kinase family. The cofactor is a divalent metal cation.

It is found in the cytoplasm. The enzyme catalyses NAD(+) + ATP = ADP + NADP(+) + H(+). Involved in the regulation of the intracellular balance of NAD and NADP, and is a key enzyme in the biosynthesis of NADP. Catalyzes specifically the phosphorylation on 2'-hydroxyl of the adenosine moiety of NAD to yield NADP. This is NAD kinase from Geobacter metallireducens (strain ATCC 53774 / DSM 7210 / GS-15).